A 267-amino-acid chain; its full sequence is Cell division protein FtsQ (267 aa).

The Cytoplasmic portion of the chain corresponds to 1 to 32 (MRKKTSSNKKNTAKKNNNISLHRKLGLIYKKT). Residues 33–53 (ILILKIVLIIFICLFAFTKYF) traverse the membrane as a helical segment. At 54 to 267 (ASLKSYLKTN…DKNKYYIEKY (214 aa)) the chain is on the periplasmic side. Positions 73–141 (FKLENVIIEG…STIYIKLFER (69 aa)) constitute a POTRA domain.

Belongs to the FtsQ/DivIB family. FtsQ subfamily.

Its subcellular location is the cell inner membrane. Its function is as follows. Essential cell division protein. The protein is Cell division protein FtsQ of Rickettsia bellii (strain RML369-C).